Consider the following 359-residue polypeptide: Aromatic amino acid aminotransferase (359 aa).

N6-(pyridoxal phosphate)lysine is present on Lys-223.

It belongs to the class-II pyridoxal-phosphate-dependent aminotransferase family. In terms of assembly, homodimer. The cofactor is pyridoxal 5'-phosphate.

It catalyses the reaction an aromatic L-alpha-amino acid + 2-oxoglutarate = an aromatic oxo-acid + L-glutamate. In terms of biological role, aminotransferase that catalyzes the conversion of aromatic amino acids and 2-oxoglutarate into corresponding aromatic oxo acids and L-glutamate. This is Aromatic amino acid aminotransferase from Streptomyces avermitilis (strain ATCC 31267 / DSM 46492 / JCM 5070 / NBRC 14893 / NCIMB 12804 / NRRL 8165 / MA-4680).